A 101-amino-acid chain; its full sequence is Chaperone modulatory protein CbpM (101 aa).

The protein belongs to the CbpM family.

In terms of biological role, interacts with CbpA and inhibits both the DnaJ-like co-chaperone activity and the DNA binding activity of CbpA. Together with CbpA, modulates the activity of the DnaK chaperone system. Does not inhibit the co-chaperone activity of DnaJ. This chain is Chaperone modulatory protein CbpM, found in Pseudomonas putida (strain W619).